Consider the following 487-residue polypeptide: Ribulose bisphosphate carboxylase large chain (487 aa).

Substrate is bound by residues asparagine 127 and threonine 177. Lysine 179 serves as the catalytic Proton acceptor. Lysine 181 is a substrate binding site. Lysine 205, aspartate 207, and glutamate 208 together coordinate Mg(2+). Lysine 205 is modified (N6-carboxylysine). The active-site Proton acceptor is histidine 297. Substrate is bound by residues arginine 298, histidine 330, and serine 382.

Belongs to the RuBisCO large chain family. Type I subfamily. Heterohexadecamer of 8 large chains and 8 small chains. Mg(2+) is required as a cofactor.

The enzyme catalyses 2 (2R)-3-phosphoglycerate + 2 H(+) = D-ribulose 1,5-bisphosphate + CO2 + H2O. It catalyses the reaction D-ribulose 1,5-bisphosphate + O2 = 2-phosphoglycolate + (2R)-3-phosphoglycerate + 2 H(+). Its function is as follows. RuBisCO catalyzes two reactions: the carboxylation of D-ribulose 1,5-bisphosphate, the primary event in carbon dioxide fixation, as well as the oxidative fragmentation of the pentose substrate. Both reactions occur simultaneously and in competition at the same active site. The polypeptide is Ribulose bisphosphate carboxylase large chain (Paracoccus denitrificans (strain Pd 1222)).